A 400-amino-acid polypeptide reads, in one-letter code: General L-amino acid transport system permease protein AapQ (400 aa).

Transmembrane regions (helical) follow at residues 29 to 49, 100 to 120, 142 to 162, 188 to 208, 225 to 245, 264 to 284, 340 to 360, and 367 to 387; these read SIFY…WVAH, LLVA…IGIG, IPPL…LPQP, TGMI…IIIA, VWTA…VSGF, VVGP…ASFI, NSSL…GTIL, and IEIV…TSLF. The ABC transmembrane type-1 domain maps to 96 to 388; the sequence is ILNTLLVAVT…SLSILTSLFM (293 aa).

It belongs to the binding-protein-dependent transport system permease family. HisMQ subfamily.

The protein localises to the cell inner membrane. Functionally, part of a binding-protein-dependent transport system for L-amino acids, affects the uptake as well as efflux of these amino acids. Probably responsible for the translocation of the substrate across the membrane. The sequence is that of General L-amino acid transport system permease protein AapQ (aapQ) from Rhizobium johnstonii (strain DSM 114642 / LMG 32736 / 3841) (Rhizobium leguminosarum bv. viciae).